The primary structure comprises 89 residues: Small ribosomal subunit protein uS19 (89 aa).

It belongs to the universal ribosomal protein uS19 family.

Its function is as follows. Protein S19 forms a complex with S13 that binds strongly to the 16S ribosomal RNA. In Brachyspira hyodysenteriae (strain ATCC 49526 / WA1), this protein is Small ribosomal subunit protein uS19.